The chain runs to 381 residues: Putative 2-heptyl-3-hydroxy-4(1H)-quinolone synthase AqdB1 (381 aa).

The protein belongs to the 3-hydroxybenzoate 6-hydroxylase family.

It catalyses the reaction 2-heptyl-4(1H)-quinolone + NADH + O2 + H(+) = 2-heptyl-3-hydroxy-4(1H)-quinolone + NAD(+) + H2O. Could be involved in the degradation of the Pseudomonas aeruginosa quorum sensing signal molecule HHQ (2-heptyl-4-quinolone) to anthranilic acid. May catalyze the hydroxylation of HHQ to PQS (2-heptyl-3-hydroxy-4-quinolone). In Rhodococcus erythropolis (Arthrobacter picolinophilus), this protein is Putative 2-heptyl-3-hydroxy-4(1H)-quinolone synthase AqdB1.